Consider the following 69-residue polypeptide: Protein SlyX homolog (69 aa).

Belongs to the SlyX family.

In Pseudomonas paraeruginosa (strain DSM 24068 / PA7) (Pseudomonas aeruginosa (strain PA7)), this protein is Protein SlyX homolog.